Reading from the N-terminus, the 269-residue chain is Phosphatidylglycerol--prolipoprotein diacylglyceryl transferase (269 aa).

Transmembrane regions (helical) follow at residues 10 to 30 (VALA…LIGI), 56 to 76 (MVFW…VLFY), 92 to 112 (WKGG…AWWF), 120 to 140 (FFEL…AGRI), 174 to 194 (PSQL…LWLF), 202 to 222 (MAVS…VEFV), and 237 to 257 (LTMG…LIWL). Arginine 139 provides a ligand contact to a 1,2-diacyl-sn-glycero-3-phospho-(1'-sn-glycerol).

Belongs to the Lgt family.

Its subcellular location is the cell inner membrane. The enzyme catalyses L-cysteinyl-[prolipoprotein] + a 1,2-diacyl-sn-glycero-3-phospho-(1'-sn-glycerol) = an S-1,2-diacyl-sn-glyceryl-L-cysteinyl-[prolipoprotein] + sn-glycerol 1-phosphate + H(+). It functions in the pathway protein modification; lipoprotein biosynthesis (diacylglyceryl transfer). Catalyzes the transfer of the diacylglyceryl group from phosphatidylglycerol to the sulfhydryl group of the N-terminal cysteine of a prolipoprotein, the first step in the formation of mature lipoproteins. This is Phosphatidylglycerol--prolipoprotein diacylglyceryl transferase from Pseudomonas fluorescens (strain ATCC BAA-477 / NRRL B-23932 / Pf-5).